The sequence spans 517 residues: Mucin-like protein 3 (517 aa).

A signal peptide spans M1–A29. Residues T30–A448 are Extracellular-facing. The segment at S67–L341 is disordered. Residues Q83–S93 are compositionally biased toward basic residues. Residue N88 is glycosylated (N-linked (GlcNAc...) asparagine). Positions T105–E116 are enriched in basic and acidic residues. N124 carries an N-linked (GlcNAc...) asparagine glycan. Over residues R169–T179 the composition is skewed to polar residues. Positions R180–E190 are enriched in basic and acidic residues. Low complexity predominate over residues S194–S213. 3 stretches are compositionally biased toward polar residues: residues G214–F225, A232–P243, and T263–A283. Basic and acidic residues predominate over residues T305 to K317. N338 is a glycosylation site (N-linked (GlcNAc...) asparagine). Residues I449 to L469 form a helical membrane-spanning segment. Residues V470–R517 lie on the Cytoplasmic side of the membrane.

In terms of tissue distribution, detected in lung, esophagus, stomach, rectum, skin, cervix, testis, kidney, uterus and small intestine. Expressed in pancreas (at protein level).

It localises to the cell membrane. It is found in the cytoplasm. Its function is as follows. May modulate NF-kappaB signaling and play a role in cell growth. This Homo sapiens (Human) protein is Mucin-like protein 3.